A 458-amino-acid chain; its full sequence is tRNA modification GTPase MnmE (458 aa).

(6S)-5-formyl-5,6,7,8-tetrahydrofolate contacts are provided by Arg26, Glu88, and Arg127. One can recognise a TrmE-type G domain in the interval 224-378; it reads GLSTAIIGRP…IEDRINQLFF (155 aa). Asn234 is a K(+) binding site. Residues 234–239, 253–259, and 278–281 contribute to the GTP site; these read NVGKSS, TDIAGTT, and DTAG. Ser238 contributes to the Mg(2+) binding site. Positions 253, 255, and 258 each coordinate K(+). Thr259 lines the Mg(2+) pocket. Position 458 (Lys458) interacts with (6S)-5-formyl-5,6,7,8-tetrahydrofolate.

The protein belongs to the TRAFAC class TrmE-Era-EngA-EngB-Septin-like GTPase superfamily. TrmE GTPase family. As to quaternary structure, homodimer. Heterotetramer of two MnmE and two MnmG subunits. K(+) is required as a cofactor.

The protein resides in the cytoplasm. Its function is as follows. Exhibits a very high intrinsic GTPase hydrolysis rate. Involved in the addition of a carboxymethylaminomethyl (cmnm) group at the wobble position (U34) of certain tRNAs, forming tRNA-cmnm(5)s(2)U34. In Streptococcus pyogenes serotype M3 (strain ATCC BAA-595 / MGAS315), this protein is tRNA modification GTPase MnmE.